Reading from the N-terminus, the 71-residue chain is Protein YqgC (71 aa).

In Escherichia coli (strain K12), this protein is Protein YqgC (yqgC).